Reading from the N-terminus, the 458-residue chain is D-inositol 3-phosphate glycosyltransferase (458 aa).

The tract at residues 1 to 29 is disordered; that stretch reads MRADRPGHRSRGINPGPGMFTLVGPDERD. Histidine 47 is a binding site for 1D-myo-inositol 3-phosphate. UDP-N-acetyl-alpha-D-glucosamine-binding positions include 53–54 and glycine 61; that span reads QP. 1D-myo-inositol 3-phosphate-binding positions include 58-63, lysine 116, tyrosine 149, threonine 173, and arginine 193; that span reads DAGGMN. The UDP-N-acetyl-alpha-D-glucosamine site is built by arginine 267, lysine 272, and valine 339. Residue alanine 351 coordinates Mg(2+). UDP-N-acetyl-alpha-D-glucosamine contacts are provided by glutamate 361 and glutamate 369. Threonine 375 is a binding site for Mg(2+).

This sequence belongs to the glycosyltransferase group 1 family. MshA subfamily. Homodimer.

The enzyme catalyses 1D-myo-inositol 3-phosphate + UDP-N-acetyl-alpha-D-glucosamine = 1D-myo-inositol 2-acetamido-2-deoxy-alpha-D-glucopyranoside 3-phosphate + UDP + H(+). Functionally, catalyzes the transfer of a N-acetyl-glucosamine moiety to 1D-myo-inositol 3-phosphate to produce 1D-myo-inositol 2-acetamido-2-deoxy-glucopyranoside 3-phosphate in the mycothiol biosynthesis pathway. The sequence is that of D-inositol 3-phosphate glycosyltransferase from Nocardioides sp. (strain ATCC BAA-499 / JS614).